Reading from the N-terminus, the 138-residue chain is ATP synthase epsilon chain (138 aa).

Belongs to the ATPase epsilon chain family. In terms of assembly, F-type ATPases have 2 components, CF(1) - the catalytic core - and CF(0) - the membrane proton channel. CF(1) has five subunits: alpha(3), beta(3), gamma(1), delta(1), epsilon(1). CF(0) has three main subunits: a, b and c.

It is found in the cell membrane. Functionally, produces ATP from ADP in the presence of a proton gradient across the membrane. The protein is ATP synthase epsilon chain of Caldanaerobacter subterraneus subsp. tengcongensis (strain DSM 15242 / JCM 11007 / NBRC 100824 / MB4) (Thermoanaerobacter tengcongensis).